We begin with the raw amino-acid sequence, 286 residues long: MHTRKAITEAIRKLGVQTGDLLMVHASLKAIGPVEGGAETVVAALRSAVGPTGTVMGYASWDRSPYEETLNGARLDDKARRTWPPFDPATAGTYRGFGLLNQFLVQAPGARRSAHPDASMVAVGPLAETLTEPHELGHALGKGSPVERFVRLGGKALLLGAPLNSVTALHYAEAVADIPNKRWVTYEMPMLGRNGEVAWKTASEYDSNGILDCFAIEGKPDAVETIANAYVKLGRHREGVVGFAQCYLFDAQDIVTFGVTYLEKHFGATPIVPAHEAAQRSCEPSG.

This sequence belongs to the antibiotic N-acetyltransferase family.

It carries out the reaction a 2-deoxystreptamine antibiotic + acetyl-CoA = an N(3)-acetyl-2-deoxystreptamine antibiotic + CoA + H(+). Resistance to antibiotics containing the 2-deoxy-streptamine ring including gentamicin, kanamycin, tobramycin, neomycin and apramycin. This is Aminoglycoside N(3)-acetyltransferase III (aacC2) from Acinetobacter baumannii.